The following is an 859-amino-acid chain: Protein translocase subunit SecA (859 aa).

ATP contacts are provided by residues Gln-88, 106–110 (GEGKT), and Asp-496. The interval 818 to 838 (FSHQPQSEVKVSRNDPCPCGS) is disordered. Positions 834, 836, 845, and 846 each coordinate Zn(2+).

Belongs to the SecA family. In terms of assembly, monomer and homodimer. Part of the essential Sec protein translocation apparatus which comprises SecA, SecYEG and auxiliary proteins SecDF-YajC and YidC. It depends on Zn(2+) as a cofactor.

It is found in the cell inner membrane. The protein localises to the cytoplasm. The catalysed reaction is ATP + H2O + cellular proteinSide 1 = ADP + phosphate + cellular proteinSide 2.. Part of the Sec protein translocase complex. Interacts with the SecYEG preprotein conducting channel. Has a central role in coupling the hydrolysis of ATP to the transfer of proteins into and across the cell membrane, serving as an ATP-driven molecular motor driving the stepwise translocation of polypeptide chains across the membrane. The polypeptide is Protein translocase subunit SecA (Wolinella succinogenes (strain ATCC 29543 / DSM 1740 / CCUG 13145 / JCM 31913 / LMG 7466 / NCTC 11488 / FDC 602W) (Vibrio succinogenes)).